The primary structure comprises 196 residues: Carnitine operon protein CaiE (196 aa).

A disordered region spans residues 173-196 (TQPLRQMEENRPRLQGTTDVTPKR). The segment covering 187–196 (QGTTDVTPKR) has biased composition (polar residues).

Belongs to the transferase hexapeptide repeat family.

It functions in the pathway amine and polyamine metabolism; carnitine metabolism. Its function is as follows. Overproduction of CaiE stimulates the activity of CaiB and CaiD. In Shigella flexneri serotype 5b (strain 8401), this protein is Carnitine operon protein CaiE.